A 514-amino-acid polypeptide reads, in one-letter code: MRGKFLSLLLLITLACIGVSAKKHSTRPRLRRNDFPQDFVFGSATSAYQCEGAAHEDGRGPSIWDSFSEKFPEKIMDGSNGSIADDSYNLYKEDVNLLHQIGFDAYRFSISWSRILPRGTLKGGINQAGIEYYNNLINQLISKGVKPFVTLFHWDLPDALENAYGGLLGDEFVNDFRDYAELCFQKFGDRVKQWTTLNEPYTMVHEGYITGQKAPGRCSNFYKPDCLGGDAATEPYIVGHNLLLAHGVAVKVYREKYQATQKGEIGIALNTAWHYPYSDSYADRLAATRATAFTFDYFMEPIVYGRYPIEMVSHVKDGRLPTFTPEESEMLKGSYDFIGVNYYSSLYAKDVPCATENITMTTDSCVSLVGERNGVPIGPAAGSDWLLIYPKGIRDLLLHAKFRYNDPVLYITENGVDEANIGKIFLNDDLRIDYYAHHLKMVSDAISIGVNVKGYFAWSLMDNFEWSEGYTVRFGLVFVDFEDGRKRYLKKSAKWFRRLLKGAHGGTNEQVAVI.

Residues 1–21 (MRGKFLSLLLLITLACIGVSA) form the signal peptide. Q49 contacts a beta-D-glucoside. The N-linked (GlcNAc...) asparagine glycan is linked to N80. A beta-D-glucoside-binding positions include H153 and 198-199 (NE). Catalysis depends on E199, which acts as the Proton donor. A disulfide bond links C218 and C226. An a beta-D-glucoside-binding site is contributed by Y343. N-linked (GlcNAc...) asparagine glycosylation occurs at N357. A beta-D-glucoside-binding positions include E413, W458, 465–466 (EW), and F474. Catalysis depends on E413, which acts as the Nucleophile.

Belongs to the glycosyl hydrolase 1 family. In terms of tissue distribution, expressed at low levels in cauline leaves and flowers.

It catalyses the reaction Hydrolysis of terminal, non-reducing beta-D-glucosyl residues with release of beta-D-glucose.. The polypeptide is Beta-glucosidase 16 (Arabidopsis thaliana (Mouse-ear cress)).